A 451-amino-acid polypeptide reads, in one-letter code: MLRLCFFISFMCLVKSDTDETCPSFTRLSFHSAVVGTGLSVRLMLYTQRDQTCAQIINSTALGSLNVTKKTTFIIHGFRPTGSPPVWIEELVQSLISVQEMNVVVVDWNRGATTVIYPHASSKTRQVASILKEFIDQMLVKGASLDNIYMIGVSLGAHIAGFVGESYEGKLGRVTGLDPAGPLFNGRPPEERLDPSDALFVDVIHSDTDALGYKEALGHIDFYPNGGLDQPGCPKTIFGGIKYFKCDHQMSVYLYLASLQNNCSITAYPCDSYRDYRNGKCVSCGAGQIVPCPRVGYYADSWKEYLWDRDPPMTKAFFDTAETKPYCMYHYFVDIVSWNKSVRRGFITIKLRGEDGNITESKIDHEPSAFEKYHQVSLLARFNRDLDKVAEISLLFSTGSVVGPKYKLRVLQMKLRSLAHPDRPHLCRYDLVLMENVETSFQPILCSQQQM.

Residues Met1–Ser16 form the signal peptide. An N-linked (GlcNAc...) asparagine glycan is attached at Asn66. Ser154 serves as the catalytic Nucleophile. Catalysis depends on Asp178, which acts as the Charge relay system. Residues Cys233 and Cys246 are joined by a disulfide bond. The active-site Charge relay system is the His248. Disulfide bonds link Cys270/Cys281, Cys284/Cys292, and Cys427/Cys446.

This sequence belongs to the AB hydrolase superfamily. Lipase family. In terms of assembly, interacts with TTMP/C3orf52. In terms of tissue distribution, expressed in placenta and colon. Weakly expressed in small intestine.

It is found in the secreted. The protein resides in the cell membrane. The enzyme catalyses 1-hexadecanoyl-2-(9Z-octadecenoyl)-sn-glycero-3-phosphate + H2O = 2-(9Z-octadecenoyl)-sn-glycero-3-phosphate + hexadecanoate + H(+). In terms of biological role, hydrolyzes specifically phosphatidic acid (PA) to produce 2-acyl lysophosphatidic acid (LPA; a potent bioactive lipid mediator) and fatty acid. Does not hydrolyze other phospholipids, like phosphatidylserine (PS), phosphatidylcholine (PC) and phosphatidylethanolamine (PE) or triacylglycerol (TG). The protein is Lipase member H (Liph) of Mus musculus (Mouse).